A 112-amino-acid chain; its full sequence is Peptidyl-prolyl cis-trans isomerase FKBP12 (112 aa).

The tract at residues 1-26 is disordered; the sequence is MGVEKQVIRPGNGPKPAPGQTVTVHC. The PPIase FKBP-type domain occupies 19 to 112; the sequence is GQTVTVHCTG…DFEIEVLSVQ (94 aa). Cys-26 and Cys-80 form a disulfide bridge.

It belongs to the FKBP-type PPIase family. Interacts with FIP37 and with the immunosuppressive drug FK506. Its interaction with FIP37 is inhibited by FK506. Interacts with TOR in a rapamycin-dependent manner.

The protein localises to the cytoplasm. It carries out the reaction [protein]-peptidylproline (omega=180) = [protein]-peptidylproline (omega=0). PPIases accelerate the folding of proteins. It catalyzes the cis-trans isomerization of proline imidic peptide bonds in oligopeptides. Mediates rapamycin inactivation of TOR protein kinase activity. This chain is Peptidyl-prolyl cis-trans isomerase FKBP12 (FKBP12), found in Arabidopsis thaliana (Mouse-ear cress).